Reading from the N-terminus, the 572-residue chain is Mitochondrial distribution and morphology protein 34 (572 aa).

In terms of domain architecture, SMP-LTD spans 1–195 (MAFNFNWSPL…LPAIIHRLSL (195 aa)). Disordered regions lie at residues 212-236 (TASANGEGPGQDPLASPPQDPVDAL), 355-426 (GAGR…PDND), 487-507 (HGASVLEKGKQDPDSSAGSSR), and 552-572 (ACGPFWDRHSQEESPPPAYGH). A compositionally biased stretch (basic residues) spans 358–370 (RHSKAHARKRKKR). Positions 371–381 (VVDLRRPKTTD) are enriched in basic and acidic residues. The segment covering 387 to 400 (SDESSFTESTSAPS) has biased composition (polar residues).

This sequence belongs to the MDM34 family. Component of the ER-mitochondria encounter structure (ERMES) or MDM complex, composed of mmm1, mdm10, mdm12 and mdm34.

Its subcellular location is the mitochondrion outer membrane. In terms of biological role, component of the ERMES/MDM complex, which serves as a molecular tether to connect the endoplasmic reticulum (ER) and mitochondria. Components of this complex are involved in the control of mitochondrial shape and protein biogenesis, and function in nonvesicular lipid trafficking between the ER and mitochondria. Mdm34 is required for the interaction of the ER-resident membrane protein mmm1 and the outer mitochondrial membrane-resident beta-barrel protein mdm10. This Aspergillus fumigatus (strain ATCC MYA-4609 / CBS 101355 / FGSC A1100 / Af293) (Neosartorya fumigata) protein is Mitochondrial distribution and morphology protein 34.